Here is a 190-residue protein sequence, read N- to C-terminus: Imidazole glycerol phosphate synthase subunit HisH (190 aa).

The region spanning Ile2 to Arg190 is the Glutamine amidotransferase type-1 domain. Cys73 (nucleophile) is an active-site residue. Residues His169 and Glu171 contribute to the active site.

In terms of assembly, heterodimer of HisH and HisF.

It is found in the cytoplasm. The catalysed reaction is 5-[(5-phospho-1-deoxy-D-ribulos-1-ylimino)methylamino]-1-(5-phospho-beta-D-ribosyl)imidazole-4-carboxamide + L-glutamine = D-erythro-1-(imidazol-4-yl)glycerol 3-phosphate + 5-amino-1-(5-phospho-beta-D-ribosyl)imidazole-4-carboxamide + L-glutamate + H(+). It catalyses the reaction L-glutamine + H2O = L-glutamate + NH4(+). The protein operates within amino-acid biosynthesis; L-histidine biosynthesis; L-histidine from 5-phospho-alpha-D-ribose 1-diphosphate: step 5/9. IGPS catalyzes the conversion of PRFAR and glutamine to IGP, AICAR and glutamate. The HisH subunit catalyzes the hydrolysis of glutamine to glutamate and ammonia as part of the synthesis of IGP and AICAR. The resulting ammonia molecule is channeled to the active site of HisF. The polypeptide is Imidazole glycerol phosphate synthase subunit HisH (Pyrobaculum aerophilum (strain ATCC 51768 / DSM 7523 / JCM 9630 / CIP 104966 / NBRC 100827 / IM2)).